We begin with the raw amino-acid sequence, 266 residues long: MDVYGLIGNPVGHSLSPPLHAAAYDECGLDARYVTFEPAPDDAAAAIRGAGALGVAGLNVTAPFKQSAASAVATDSMAARVGAVNTIDFSGAAPRGYNTDVAGVKRAFAHHDVSLSGAQAVVVGAGGAGRAAAFALADAGATVRIANRTRAAADELAADVGGTAVGLGDLPRSLADATVLVHATTVGMDDPDTSPVSADALHDDLAVLDAVYSPVETRLLRDAAAAGATTIDGAWMLLYQGAEAFERWTGLDAPVAAMRAALRARL.

Residues 14–16 and threonine 61 contribute to the shikimate site; that span reads SLS. Residue lysine 65 is the Proton acceptor of the active site. Shikimate contacts are provided by asparagine 85 and aspartate 100. NADP(+) contacts are provided by residues 124 to 128 and alanine 210; that span reads GAGGA. Tyrosine 212 provides a ligand contact to shikimate. Residue glycine 233 coordinates NADP(+).

It belongs to the shikimate dehydrogenase family. As to quaternary structure, homodimer.

The enzyme catalyses shikimate + NADP(+) = 3-dehydroshikimate + NADPH + H(+). It functions in the pathway metabolic intermediate biosynthesis; chorismate biosynthesis; chorismate from D-erythrose 4-phosphate and phosphoenolpyruvate: step 4/7. Functionally, involved in the biosynthesis of the chorismate, which leads to the biosynthesis of aromatic amino acids. Catalyzes the reversible NADPH linked reduction of 3-dehydroshikimate (DHSA) to yield shikimate (SA). This Halobacterium salinarum (strain ATCC 29341 / DSM 671 / R1) protein is Shikimate dehydrogenase (NADP(+)).